Here is a 349-residue protein sequence, read N- to C-terminus: Putative ABC transporter permease protein MJ0087 (349 aa).

Transmembrane regions (helical) follow at residues 15–35 (IIFG…ALCV), 69–89 (IFAA…MQCI), 100–120 (MGIS…FGFG), 135–155 (MITI…LLLA), 166–186 (ILAG…IQYF), 206–226 (AIWT…IYFM), 254–274 (LIGM…LGII), 295–315 (FLIP…DTFA), and 318–338 (IIAP…APMF).

This sequence belongs to the binding-protein-dependent transport system permease family. FecCD subfamily.

The protein resides in the cell membrane. In terms of biological role, probably part of a binding-protein-dependent transport system. Probably responsible for the translocation of the substrate across the membrane. This is Putative ABC transporter permease protein MJ0087 from Methanocaldococcus jannaschii (strain ATCC 43067 / DSM 2661 / JAL-1 / JCM 10045 / NBRC 100440) (Methanococcus jannaschii).